The following is a 658-amino-acid chain: Glycogen debranching enzyme (658 aa).

Aspartate 336 serves as the catalytic Nucleophile. The active-site Proton donor is glutamate 371. The segment at glutamate 459 to glycine 484 is disordered.

Belongs to the glycosyl hydrolase 13 family.

The enzyme catalyses Hydrolysis of (1-&gt;6)-alpha-D-glucosidic linkages to branches with degrees of polymerization of three or four glucose residues in limit dextrin.. Its pathway is glycan degradation; glycogen degradation. Its function is as follows. Removes maltotriose and maltotetraose chains that are attached by 1,6-alpha-linkage to the limit dextrin main chain, generating a debranched limit dextrin. This chain is Glycogen debranching enzyme, found in Salmonella dublin (strain CT_02021853).